Consider the following 479-residue polypeptide: Glutamate--tRNA ligase (479 aa).

The short motif at 9–19 is the 'HIGH' region element; that stretch reads PSPTGLFHIGT. The 'KMSKS' region signature appears at 248–252; the sequence is KLSKR. Lys251 provides a ligand contact to ATP.

This sequence belongs to the class-I aminoacyl-tRNA synthetase family. Glutamate--tRNA ligase type 1 subfamily. In terms of assembly, monomer.

The protein localises to the cytoplasm. It carries out the reaction tRNA(Glu) + L-glutamate + ATP = L-glutamyl-tRNA(Glu) + AMP + diphosphate. Functionally, catalyzes the attachment of glutamate to tRNA(Glu) in a two-step reaction: glutamate is first activated by ATP to form Glu-AMP and then transferred to the acceptor end of tRNA(Glu). The chain is Glutamate--tRNA ligase from Prochlorococcus marinus (strain MIT 9312).